A 187-amino-acid polypeptide reads, in one-letter code: Large ribosomal subunit protein uL5 (187 aa).

The protein belongs to the universal ribosomal protein uL5 family. As to quaternary structure, part of the 50S ribosomal subunit; part of the 5S rRNA/L5/L18/L25 subcomplex. Contacts the 5S rRNA and the P site tRNA. Forms a bridge to the 30S subunit in the 70S ribosome.

Its function is as follows. This is one of the proteins that bind and probably mediate the attachment of the 5S RNA into the large ribosomal subunit, where it forms part of the central protuberance. In the 70S ribosome it contacts protein S13 of the 30S subunit (bridge B1b), connecting the 2 subunits; this bridge is implicated in subunit movement. Contacts the P site tRNA; the 5S rRNA and some of its associated proteins might help stabilize positioning of ribosome-bound tRNAs. This Mycobacterium avium (strain 104) protein is Large ribosomal subunit protein uL5.